Reading from the N-terminus, the 305-residue chain is tRNA dimethylallyltransferase 2 (305 aa).

14–21 contacts ATP; the sequence is GPTASGKT. 16–21 lines the substrate pocket; that stretch reads TASGKT. The interaction with substrate tRNA stretch occupies residues 39–42; it reads DSRQ.

Belongs to the IPP transferase family. In terms of assembly, monomer. The cofactor is Mg(2+).

It carries out the reaction adenosine(37) in tRNA + dimethylallyl diphosphate = N(6)-dimethylallyladenosine(37) in tRNA + diphosphate. Functionally, catalyzes the transfer of a dimethylallyl group onto the adenine at position 37 in tRNAs that read codons beginning with uridine, leading to the formation of N6-(dimethylallyl)adenosine (i(6)A). The sequence is that of tRNA dimethylallyltransferase 2 from Trichlorobacter lovleyi (strain ATCC BAA-1151 / DSM 17278 / SZ) (Geobacter lovleyi).